Consider the following 236-residue polypeptide: Ribosome assembly factor MRT4 (236 aa).

The protein belongs to the universal ribosomal protein uL10 family. In terms of assembly, associates with the pre-60S ribosomal particle.

It is found in the nucleus. The protein localises to the nucleolus. The protein resides in the cytoplasm. Functionally, component of the ribosome assembly machinery. Nuclear paralog of the ribosomal protein P0, it binds pre-60S subunits at an early stage of assembly in the nucleolus, and is replaced by P0 in cytoplasmic pre-60S subunits and mature 80S ribosomes. The sequence is that of Ribosome assembly factor MRT4 from Saccharomyces cerevisiae (strain ATCC 204508 / S288c) (Baker's yeast).